Reading from the N-terminus, the 262-residue chain is Thiazole synthase (262 aa).

Residue Lys97 is the Schiff-base intermediate with DXP of the active site. Residues Gly158, 185–186 (AG), and 207–208 (NT) each bind 1-deoxy-D-xylulose 5-phosphate. The disordered stretch occupies residues 243–262 (DKAQASTPTVGQPFWHSAEY).

The protein belongs to the ThiG family. As to quaternary structure, homotetramer. Forms heterodimers with either ThiH or ThiS.

Its subcellular location is the cytoplasm. It catalyses the reaction [ThiS sulfur-carrier protein]-C-terminal-Gly-aminoethanethioate + 2-iminoacetate + 1-deoxy-D-xylulose 5-phosphate = [ThiS sulfur-carrier protein]-C-terminal Gly-Gly + 2-[(2R,5Z)-2-carboxy-4-methylthiazol-5(2H)-ylidene]ethyl phosphate + 2 H2O + H(+). The protein operates within cofactor biosynthesis; thiamine diphosphate biosynthesis. Functionally, catalyzes the rearrangement of 1-deoxy-D-xylulose 5-phosphate (DXP) to produce the thiazole phosphate moiety of thiamine. Sulfur is provided by the thiocarboxylate moiety of the carrier protein ThiS. In vitro, sulfur can be provided by H(2)S. This is Thiazole synthase from Neisseria meningitidis serogroup C (strain 053442).